A 180-amino-acid chain; its full sequence is Bifunctional protein PyrR (180 aa).

A PRPP-binding motif is present at residues 99-111 (VILVDDVLYTCRT).

It belongs to the purine/pyrimidine phosphoribosyltransferase family. PyrR subfamily. As to quaternary structure, homodimer and homohexamer; in equilibrium.

It carries out the reaction UMP + diphosphate = 5-phospho-alpha-D-ribose 1-diphosphate + uracil. Regulates transcriptional attenuation of the pyrimidine nucleotide (pyr) operon by binding in a uridine-dependent manner to specific sites on pyr mRNA. This disrupts an antiterminator hairpin in the RNA and favors formation of a downstream transcription terminator, leading to a reduced expression of downstream genes. Its function is as follows. Also displays a weak uracil phosphoribosyltransferase activity which is not physiologically significant. The protein is Bifunctional protein PyrR of Clostridium botulinum (strain Alaska E43 / Type E3).